The sequence spans 72 residues: MAKADVIEVEGKVTETLPNAMFKVELENGAEILAHVSGKIRMHYIKILPGDRVKVEMSPYDLTKGRITFRFK.

Positions 1-72 (MAKADVIEVE…TKGRITFRFK (72 aa)) constitute an S1-like domain.

This sequence belongs to the IF-1 family. In terms of assembly, component of the 30S ribosomal translation pre-initiation complex which assembles on the 30S ribosome in the order IF-2 and IF-3, IF-1 and N-formylmethionyl-tRNA(fMet); mRNA recruitment can occur at any time during PIC assembly.

The protein localises to the cytoplasm. One of the essential components for the initiation of protein synthesis. Stabilizes the binding of IF-2 and IF-3 on the 30S subunit to which N-formylmethionyl-tRNA(fMet) subsequently binds. Helps modulate mRNA selection, yielding the 30S pre-initiation complex (PIC). Upon addition of the 50S ribosomal subunit IF-1, IF-2 and IF-3 are released leaving the mature 70S translation initiation complex. In Limosilactobacillus reuteri (strain DSM 20016) (Lactobacillus reuteri), this protein is Translation initiation factor IF-1.